Consider the following 1231-residue polypeptide: Alpha-protein kinase 1 (1231 aa).

Residues F61, Q67, R116, R150 to R153, D231, K233, S236 to T237, and F295 contribute to the ADP-D-glycero-beta-D-manno-heptose site. 6 disordered regions span residues E508–T540, G609–A637, G692–P739, T767–Q791, P811–G843, and A859–D888. Residues R509–K522 are compositionally biased toward polar residues. Basic and acidic residues predominate over residues S524–R537. A compositionally biased stretch (low complexity) spans S700–S714. Residues P775–D784 are compositionally biased toward acidic residues. In terms of domain architecture, Alpha-type protein kinase spans K1003–P1223.

The protein belongs to the protein kinase superfamily. Alpha-type protein kinase family. ALPK subfamily. Widely expressed. Expressed in the retina and in sweat glands, especially in the myoepithelial cells.

The protein resides in the cytoplasm. Its subcellular location is the cytosol. It localises to the cytoskeleton. It is found in the spindle pole. The protein localises to the microtubule organizing center. The protein resides in the centrosome. Its subcellular location is the cell projection. It localises to the cilium. The catalysed reaction is L-seryl-[protein] + ATP = O-phospho-L-seryl-[protein] + ADP + H(+). It carries out the reaction L-threonyl-[protein] + ATP = O-phospho-L-threonyl-[protein] + ADP + H(+). With respect to regulation, serine/threonine-protein kinase activity is stimulated upon ADP-D-glycero-beta-D-manno-heptose (ADP-Heptose)-binding. Its function is as follows. Serine/threonine-protein kinase that detects bacterial pathogen-associated molecular pattern metabolites (PAMPs) and initiates an innate immune response, a critical step for pathogen elimination and engagement of adaptive immunity. Specifically recognizes and binds ADP-D-glycero-beta-D-manno-heptose (ADP-Heptose), a potent PAMP present in all Gram-negative and some Gram-positive bacteria. ADP-Heptose-binding stimulates its kinase activity to phosphorylate and activate TIFA, triggering pro-inflammatory NF-kappa-B signaling. May be involved in monosodium urate monohydrate (MSU)-induced inflammation by mediating phosphorylation of unconventional myosin MYO9A. May also play a role in apical protein transport by mediating phosphorylation of unconventional myosin MYO1A. May play a role in ciliogenesis. This is Alpha-protein kinase 1 from Mus musculus (Mouse).